Reading from the N-terminus, the 244-residue chain is Probable transcriptional regulatory protein Aasi_0624 (244 aa).

Belongs to the TACO1 family.

It is found in the cytoplasm. This is Probable transcriptional regulatory protein Aasi_0624 from Amoebophilus asiaticus (strain 5a2).